The following is a 663-amino-acid chain: Translation factor GUF1 homolog, mitochondrial (663 aa).

Residues 1–33 (MAGAAALRRSARRVVLPGAYALSRALQHPERLL) constitute a mitochondrion transit peptide. Positions 55–247 (ERVRNFSIIA…AVIERIPSPP (193 aa)) constitute a tr-type G domain. GTP-binding positions include 64–71 (AHVDHGKS), 140–144 (DTPGH), and 194–197 (NKID).

Belongs to the TRAFAC class translation factor GTPase superfamily. Classic translation factor GTPase family. LepA subfamily.

The protein resides in the mitochondrion inner membrane. The enzyme catalyses GTP + H2O = GDP + phosphate + H(+). Promotes mitochondrial protein synthesis. May act as a fidelity factor of the translation reaction, by catalyzing a one-codon backward translocation of tRNAs on improperly translocated ribosomes. Binds to mitochondrial ribosomes in a GTP-dependent manner. The protein is Translation factor GUF1 homolog, mitochondrial of Oryza sativa subsp. japonica (Rice).